We begin with the raw amino-acid sequence, 90 residues long: Arminin 7722 (90 aa).

The N-terminal stretch at 1–18 (MRSASLILFVAIVALTYA) is a signal peptide. The propeptide occupies 19 to 59 (RSYEDIKEEIRNEVENEILDDLEEENDELDDNAQEVSDPRA). Thr-87 is subject to Threonine amide.

This sequence belongs to the arminin family. In terms of tissue distribution, expressed in entodermal epithelium along the body column.

The protein resides in the secreted. Its subcellular location is the target cell membrane. Its function is as follows. Antimicrobial peptide with a broad-spectrum antimicrobial activity. Keeps its antibacterial activity under a wide range of salt concentrations that mimic physiological conditions of human blood, which is surprising, since Hydra is an obligate freshwater animal with nearly no salt tolerance. Does not affect red blood cells. In Hydra vulgaris (Hydra), this protein is Arminin 7722.